Reading from the N-terminus, the 879-residue chain is Alanine--tRNA ligase (879 aa).

Zn(2+) is bound by residues H564, H568, C666, and H670.

It belongs to the class-II aminoacyl-tRNA synthetase family. It depends on Zn(2+) as a cofactor.

It is found in the cytoplasm. The catalysed reaction is tRNA(Ala) + L-alanine + ATP = L-alanyl-tRNA(Ala) + AMP + diphosphate. Functionally, catalyzes the attachment of alanine to tRNA(Ala) in a two-step reaction: alanine is first activated by ATP to form Ala-AMP and then transferred to the acceptor end of tRNA(Ala). Also edits incorrectly charged Ser-tRNA(Ala) and Gly-tRNA(Ala) via its editing domain. This Crocosphaera subtropica (strain ATCC 51142 / BH68) (Cyanothece sp. (strain ATCC 51142)) protein is Alanine--tRNA ligase.